A 257-amino-acid chain; its full sequence is S-methyl-5'-thioadenosine phosphorylase (257 aa).

Residues serine 10, 50–51 (RH), and 83–84 (TA) contribute to the phosphate site. Methionine 180 is a substrate binding site. Residue threonine 181 participates in phosphate binding. 204-206 (DYD) contacts substrate.

Belongs to the PNP/MTAP phosphorylase family. MTAP subfamily. As to quaternary structure, homohexamer. Dimer of a homotrimer.

The catalysed reaction is S-methyl-5'-thioadenosine + phosphate = 5-(methylsulfanyl)-alpha-D-ribose 1-phosphate + adenine. It catalyses the reaction adenosine + phosphate = alpha-D-ribose 1-phosphate + adenine. The protein operates within amino-acid biosynthesis; L-methionine biosynthesis via salvage pathway; S-methyl-5-thio-alpha-D-ribose 1-phosphate from S-methyl-5'-thioadenosine (phosphorylase route): step 1/1. In terms of biological role, catalyzes the reversible phosphorylation of S-methyl-5'-thioadenosine (MTA) to adenine and 5-methylthioribose-1-phosphate. Involved in the breakdown of MTA, a major by-product of polyamine biosynthesis. Responsible for the first step in the methionine salvage pathway after MTA has been generated from S-adenosylmethionine. Has broad substrate specificity with 6-aminopurine nucleosides as preferred substrates. Can also use adenosine as substrate to form ribose 1-phosphate. This Thermococcus kodakarensis (strain ATCC BAA-918 / JCM 12380 / KOD1) (Pyrococcus kodakaraensis (strain KOD1)) protein is S-methyl-5'-thioadenosine phosphorylase.